We begin with the raw amino-acid sequence, 150 residues long: UPF0756 membrane protein STH2648 (150 aa).

4 consecutive transmembrane segments (helical) span residues 13–33 (ALGVVARNALIVTAAGVVLIL), 52–72 (AGLIFLLIAVLVPFATGEVGW), 85–105 (LAAILGGIIAAVLSGYGVTLL), and 111–131 (VIVGMVVGTILGVVLFKGIPV).

It belongs to the UPF0756 family.

It is found in the cell membrane. In Symbiobacterium thermophilum (strain DSM 24528 / JCM 14929 / IAM 14863 / T), this protein is UPF0756 membrane protein STH2648.